A 357-amino-acid chain; its full sequence is UDP-N-acetylglucosamine--N-acetylmuramyl-(pentapeptide) pyrophosphoryl-undecaprenol N-acetylglucosamine transferase (357 aa).

Residues 13–15 (TGG), Asn-125, Arg-161, Ser-189, Ile-243, and Gln-288 each bind UDP-N-acetyl-alpha-D-glucosamine.

This sequence belongs to the glycosyltransferase 28 family. MurG subfamily.

It localises to the cell inner membrane. The catalysed reaction is di-trans,octa-cis-undecaprenyl diphospho-N-acetyl-alpha-D-muramoyl-L-alanyl-D-glutamyl-meso-2,6-diaminopimeloyl-D-alanyl-D-alanine + UDP-N-acetyl-alpha-D-glucosamine = di-trans,octa-cis-undecaprenyl diphospho-[N-acetyl-alpha-D-glucosaminyl-(1-&gt;4)]-N-acetyl-alpha-D-muramoyl-L-alanyl-D-glutamyl-meso-2,6-diaminopimeloyl-D-alanyl-D-alanine + UDP + H(+). Its pathway is cell wall biogenesis; peptidoglycan biosynthesis. In terms of biological role, cell wall formation. Catalyzes the transfer of a GlcNAc subunit on undecaprenyl-pyrophosphoryl-MurNAc-pentapeptide (lipid intermediate I) to form undecaprenyl-pyrophosphoryl-MurNAc-(pentapeptide)GlcNAc (lipid intermediate II). The polypeptide is UDP-N-acetylglucosamine--N-acetylmuramyl-(pentapeptide) pyrophosphoryl-undecaprenol N-acetylglucosamine transferase (Bordetella parapertussis (strain 12822 / ATCC BAA-587 / NCTC 13253)).